The following is a 486-amino-acid chain: dTDP-4-dehydro-6-deoxy-alpha-D-glucopyranose 2,3-dehydratase (486 aa).

DTDP-4-dehydro-6-deoxy-alpha-D-glucose-binding positions include Trp66, Thr149–Tyr153, Ser187, Trp304, Arg367, Gln383–Ser385, Asn388–Tyr389, and Glu421–Arg424.

This sequence belongs to the hexose 2,3-dehydratase family. In terms of assembly, homodimer.

It carries out the reaction dTDP-4-dehydro-6-deoxy-alpha-D-glucose = dTDP-3,4-didehydro-2,6-dideoxy-alpha-D-glucose + H2O. Involved in the biosynthesis of forosamine ((4-dimethylamino)-2,3,4,6-tetradeoxy-alpha-D-threo-hexopyranose), a highly deoxygenated sugar component of several bioactive natural products such as the insecticidal spinosyns A and D. Catalyzes the removal of the hydroxyl group at position C-2 of the hexose ring of dTDP-4-dehydro-6-deoxy-alpha-D-glucopyranose, and the oxidation of the hydroxyl group at position C-3 to form a carbonyl functionality. The product of the reaction, dTDP-2,6-dideoxy-D-glycero-hex-2-enos-4-ulose, is a highly unstable diketosugar, which spontaneously forms dTDP-3,4-didehydro-2,6-dideoxy-alpha-D-glucose. This Saccharopolyspora spinosa protein is dTDP-4-dehydro-6-deoxy-alpha-D-glucopyranose 2,3-dehydratase.